We begin with the raw amino-acid sequence, 192 residues long: RNA-free ribonuclease P (192 aa).

It belongs to the HARP family.

It carries out the reaction Endonucleolytic cleavage of RNA, removing 5'-extranucleotides from tRNA precursor.. Functionally, RNA-free RNase P that catalyzes the removal of the 5'-leader sequence from pre-tRNA to produce the mature 5'-terminus. The sequence is that of RNA-free ribonuclease P from Alkalilimnicola ehrlichii (strain ATCC BAA-1101 / DSM 17681 / MLHE-1).